The primary structure comprises 310 residues: Cytochrome f (310 aa).

Positions 1–23 (MRRLIPILLGSLVLSLSILVAPA) are cleaved as a signal peptide. 4 residues coordinate heme: tyrosine 28, cysteine 48, cysteine 51, and histidine 52. Residues 277–297 (IYGLLAFFVAVSLAQILLVLK) traverse the membrane as a helical segment.

This sequence belongs to the cytochrome f family. As to quaternary structure, the 4 large subunits of the cytochrome b6-f complex are cytochrome b6, subunit IV (17 kDa polypeptide, PetD), cytochrome f and the Rieske protein, while the 4 small subunits are PetG, PetL, PetM and PetN. The complex functions as a dimer. Requires heme as cofactor.

It localises to the cellular thylakoid membrane. Component of the cytochrome b6-f complex, which mediates electron transfer between photosystem II (PSII) and photosystem I (PSI), cyclic electron flow around PSI, and state transitions. The protein is Cytochrome f of Prochlorococcus marinus (strain MIT 9303).